Reading from the N-terminus, the 60-residue chain is MAVQQNKKSRSRKGMRRSHDRVAIPAVIYCSCGEPTVPHCVCPSCGTYKGRQVVAKSDNE.

Belongs to the bacterial ribosomal protein bL32 family.

The chain is Large ribosomal subunit protein bL32 from Desulfovibrio desulfuricans (strain ATCC 27774 / DSM 6949 / MB).